Reading from the N-terminus, the 112-residue chain is UPF0122 protein CPE1714 (112 aa).

This sequence belongs to the UPF0122 family.

Might take part in the signal recognition particle (SRP) pathway. This is inferred from the conservation of its genetic proximity to ftsY/ffh. May be a regulatory protein. The chain is UPF0122 protein CPE1714 from Clostridium perfringens (strain 13 / Type A).